A 384-amino-acid polypeptide reads, in one-letter code: Sphingosine 1-phosphate receptor 3 (384 aa).

Over 1 to 34 (MMINPLIYLHYNYTGKLDHRPTVGTSPGTRDPKT) the chain is Extracellular. N-linked (GlcNAc...) asparagine glycosylation is present at N12. A helical membrane pass occupies residues 35-55 (IAFLVVCSFIILENLTVLLAI). The Cytoplasmic segment spans residues 56–64 (WKNHRFHNR). The helical transmembrane segment at 65 to 85 (MYFFIGNLALCDLLASVAYLV) threads the bilayer. The Extracellular segment spans residues 86 to 105 (NLLLSGEKTLQLSPVLWFVR). Residues 106–126 (EGSMFVTLGASIFSLLAIAIE) traverse the membrane as a helical segment. The Cytoplasmic portion of the chain corresponds to 127–144 (RHLTMIKMRPYDASKNYR). The helical transmembrane segment at 145-165 (VFLLIGTCWLVAVLLGALPIL) threads the bilayer. Residues 166-186 (GWNCLGNLPDCSTILPLYTKK) are Extracellular-facing. The chain crosses the membrane as a helical span at residues 187–207 (YVAFCIIVFIVLLLAMSVLYA). The Cytoplasmic portion of the chain corresponds to 208-235 (RIYILVKSSSQKVSKHRNSEHAMSLLRT). Residues 236-256 (VIIVVGVFIACWMPIFVLLLL) form a helical membrane-spanning segment. Topologically, residues 257–271 (DVACERPCPILYKAD) are extracellular. The chain crosses the membrane as a helical span at residues 272-292 (WFIAVAVLNSAMNPIIYTLAS). The Cytoplasmic portion of the chain corresponds to 293-384 (REMRRAFLGL…REGEGGNGGR (92 aa)). Composition is skewed to polar residues over residues 315–325 (NDSGNKQFQEP) and 336–347 (QTHPNQSQQSSR). Positions 315–384 (NDSGNKQFQE…REGEGGNGGR (70 aa)) are disordered. The span at 349–359 (AELDREQETGH) shows a compositional bias: basic and acidic residues.

It belongs to the G-protein coupled receptor 1 family.

Its subcellular location is the cell membrane. Its function is as follows. Receptor for the lysosphingolipid sphingosine 1-phosphate (S1P). The protein is Sphingosine 1-phosphate receptor 3 (s1pr3) of Takifugu rubripes (Japanese pufferfish).